Consider the following 306-residue polypeptide: tRNA-cytidine(32) 2-sulfurtransferase (306 aa).

The PP-loop motif motif lies at 49 to 54; the sequence is SGGKDS. Residues C124, C127, and C215 each contribute to the [4Fe-4S] cluster site.

It belongs to the TtcA family. Homodimer. Mg(2+) is required as a cofactor. Requires [4Fe-4S] cluster as cofactor.

It localises to the cytoplasm. It catalyses the reaction cytidine(32) in tRNA + S-sulfanyl-L-cysteinyl-[cysteine desulfurase] + AH2 + ATP = 2-thiocytidine(32) in tRNA + L-cysteinyl-[cysteine desulfurase] + A + AMP + diphosphate + H(+). It functions in the pathway tRNA modification. Functionally, catalyzes the ATP-dependent 2-thiolation of cytidine in position 32 of tRNA, to form 2-thiocytidine (s(2)C32). The sulfur atoms are provided by the cysteine/cysteine desulfurase (IscS) system. This chain is tRNA-cytidine(32) 2-sulfurtransferase, found in Azoarcus sp. (strain BH72).